A 179-amino-acid chain; its full sequence is Inner membrane-spanning protein YciB (179 aa).

A run of 6 helical transmembrane segments spans residues 3-23 (FLFD…ADIY), 24-44 (TATA…WFRH), 49-69 (PMQW…LVLH), 76-96 (WKPT…VLVW), 121-141 (LAWA…AYQF), and 149-169 (FKLF…SVWL).

It belongs to the YciB family.

Its subcellular location is the cell inner membrane. Plays a role in cell envelope biogenesis, maintenance of cell envelope integrity and membrane homeostasis. In Cupriavidus taiwanensis (strain DSM 17343 / BCRC 17206 / CCUG 44338 / CIP 107171 / LMG 19424 / R1) (Ralstonia taiwanensis (strain LMG 19424)), this protein is Inner membrane-spanning protein YciB.